The following is a 112-amino-acid chain: Cytochrome c-551 (112 aa).

Positions 1 to 20 are cleaved as a signal peptide; sequence MKSKLSILMIGFALSVLLAA. Residue Cys21 is the site of N-palmitoyl cysteine attachment. Cys21 carries S-diacylglycerol cysteine lipidation. The segment covering 25-35 has biased composition (basic and acidic residues); it reads DAKEEKTDTGS. The tract at residues 25-44 is disordered; it reads DAKEEKTDTGSKTEATASEG. A Cytochrome c domain is found at 39 to 112; that stretch reads ATASEGEELY…VIAKWLSEKK (74 aa). Residues Cys52, Cys55, His56, and Met91 each coordinate heme c.

Post-translationally, binds 1 heme c group covalently per subunit.

Its subcellular location is the cell membrane. Functionally, electron carrier protein. This chain is Cytochrome c-551 (cccB), found in Bacillus subtilis (strain 168).